The sequence spans 442 residues: Lipoyl synthase, apicoplast (442 aa).

The first 23 residues, 1 to 23, serve as a signal peptide directing secretion; it reads MRVLTPSLYIYAFFIFCVRFKCG. The interval 104 to 154 is disordered; it reads LGEHQLKGKRKESATNVEKEKKEKEQQEERLPVPKVGNKMPEKKPDWFHVP. The segment covering 114-135 has biased composition (basic and acidic residues); the sequence is KESATNVEKEKKEKEQQEERLP. The [4Fe-4S] cluster site is built by cysteine 177, cysteine 182, cysteine 188, cysteine 203, cysteine 207, cysteine 210, and serine 418. In terms of domain architecture, Radical SAM core spans 189–407; the sequence is WNIGTATIML…KEEGMKMGFK (219 aa).

Belongs to the radical SAM superfamily. Lipoyl synthase family. It depends on [4Fe-4S] cluster as a cofactor.

Its subcellular location is the plastid. The protein resides in the apicoplast. It carries out the reaction [[Fe-S] cluster scaffold protein carrying a second [4Fe-4S](2+) cluster] + N(6)-octanoyl-L-lysyl-[protein] + 2 oxidized [2Fe-2S]-[ferredoxin] + 2 S-adenosyl-L-methionine + 4 H(+) = [[Fe-S] cluster scaffold protein] + N(6)-[(R)-dihydrolipoyl]-L-lysyl-[protein] + 4 Fe(3+) + 2 hydrogen sulfide + 2 5'-deoxyadenosine + 2 L-methionine + 2 reduced [2Fe-2S]-[ferredoxin]. It participates in protein modification; protein lipoylation via endogenous pathway; protein N(6)-(lipoyl)lysine from octanoyl-[acyl-carrier-protein]: step 2/2. Its function is as follows. Catalyzes the radical-mediated insertion of two sulfur atoms into the C-6 and C-8 positions of the octanoyl moiety bound to the lipoyl domains of lipoate-dependent enzymes, thereby converting the octanoylated domains into lipoylated derivatives. This chain is Lipoyl synthase, apicoplast, found in Plasmodium knowlesi (strain H).